The sequence spans 242 residues: Probable 2-phosphosulfolactate phosphatase (242 aa).

Belongs to the ComB family. Mg(2+) is required as a cofactor.

The enzyme catalyses (2R)-O-phospho-3-sulfolactate + H2O = (2R)-3-sulfolactate + phosphate. This is Probable 2-phosphosulfolactate phosphatase from Picosynechococcus sp. (strain ATCC 27264 / PCC 7002 / PR-6) (Agmenellum quadruplicatum).